A 156-amino-acid chain; its full sequence is Transcription antitermination protein NusB (156 aa).

It belongs to the NusB family.

In terms of biological role, involved in transcription antitermination. Required for transcription of ribosomal RNA (rRNA) genes. Binds specifically to the boxA antiterminator sequence of the ribosomal RNA (rrn) operons. This Rickettsia felis (strain ATCC VR-1525 / URRWXCal2) (Rickettsia azadi) protein is Transcription antitermination protein NusB.